Reading from the N-terminus, the 740-residue chain is Putative Pol polyprotein from transposon element Bs1 (740 aa).

One copy of the PPR repeat lies at T469–P503.

Functionally, bs1 is probably an active plant retrotransposon. This Zea mays (Maize) protein is Putative Pol polyprotein from transposon element Bs1.